Consider the following 527-residue polypeptide: Laccase-5 (527 aa).

A signal peptide spans 1–23 (MGKFHSFVNVVALSLSLSGRVFG). Residues 25–150 (IGPVTDLTIS…DGLRGPLVVY (126 aa)) enclose the Plastocyanin-like 1 domain. N74 and N77 each carry an N-linked (GlcNAc...) asparagine glycan. Residues H87, H89, H132, and H134 each contribute to the Cu cation site. Disulfide bonds link C108–C516 and C140–C230. N156, N209, N233, N242, N276, N317, N358, N366, N393, and N402 each carry an N-linked (GlcNAc...) asparagine glycan. One can recognise a Plastocyanin-like 2 domain in the interval 162 to 306 (VDDDTTVITL…GGVNSAILRY (145 aa)). The Plastocyanin-like 3 domain occupies 373-498 (TVPVLLQILS…AGFAIVFAED (126 aa)). Cu cation is bound by residues H425, H428, H430, H480, C481, H482, and H486.

The protein belongs to the multicopper oxidase family. Cu cation serves as cofactor.

It localises to the secreted. The enzyme catalyses 4 hydroquinone + O2 = 4 benzosemiquinone + 2 H2O. Functionally, lignin degradation and detoxification of lignin-derived products. In Trametes versicolor (White-rot fungus), this protein is Laccase-5 (LCC5).